A 98-amino-acid chain; its full sequence is NADH-ubiquinone oxidoreductase chain 4L (98 aa).

3 helical membrane passes run 1–21, 26–46, and 61–81; these read MSLIHMNVMMAFSMSLVGLLM, LMSALLCLEGMALSLFIFTTL, and IILLVFTACEAAIGLALLVMI.

The protein belongs to the complex I subunit 4L family. In terms of assembly, core subunit of respiratory chain NADH dehydrogenase (Complex I) which is composed of 45 different subunits.

Its subcellular location is the mitochondrion inner membrane. The enzyme catalyses a ubiquinone + NADH + 5 H(+)(in) = a ubiquinol + NAD(+) + 4 H(+)(out). Its function is as follows. Core subunit of the mitochondrial membrane respiratory chain NADH dehydrogenase (Complex I) which catalyzes electron transfer from NADH through the respiratory chain, using ubiquinone as an electron acceptor. Part of the enzyme membrane arm which is embedded in the lipid bilayer and involved in proton translocation. The protein is NADH-ubiquinone oxidoreductase chain 4L (MT-ND4L) of Physeter macrocephalus (Sperm whale).